Here is a 371-residue protein sequence, read N- to C-terminus: Putative glutamate--cysteine ligase 2 (371 aa).

This sequence belongs to the glutamate--cysteine ligase type 2 family. YbdK subfamily.

The enzyme catalyses L-cysteine + L-glutamate + ATP = gamma-L-glutamyl-L-cysteine + ADP + phosphate + H(+). Functionally, ATP-dependent carboxylate-amine ligase which exhibits weak glutamate--cysteine ligase activity. This chain is Putative glutamate--cysteine ligase 2, found in Paraburkholderia phytofirmans (strain DSM 17436 / LMG 22146 / PsJN) (Burkholderia phytofirmans).